A 314-amino-acid polypeptide reads, in one-letter code: Olfactory receptor 5P72 (314 aa).

Topologically, residues 1-28 are extracellular; it reads MAFLEVGNHTAVTEFILLGLTDDPVLRV. Residue Asn8 is glycosylated (N-linked (GlcNAc...) asparagine). A helical transmembrane segment spans residues 29–49; the sequence is VLFTIILCIYLVTVMGNLSTI. The Cytoplasmic portion of the chain corresponds to 50–57; the sequence is LLIRVSSQ. Residues 58-78 form a helical membrane-spanning segment; sequence LHHPMYFFLSHLASVDMGLSS. The Extracellular segment spans residues 79–102; that stretch reads SVTPNMLLNFLIERNTISYLGCGI. The cysteines at positions 100 and 192 are disulfide-linked. A helical membrane pass occupies residues 103-123; that stretch reads QQSLADFFGSVECFLLAAMAY. The Cytoplasmic portion of the chain corresponds to 124-136; it reads DRFMAICNPLLYS. Residues 137-157 traverse the membrane as a helical segment; the sequence is TKMSTKVCVQLVVGSYIGGFL. Residues 158 to 199 are Extracellular-facing; that stretch reads NASLIMFYFFSFLFCGPNRVDHFFCDFAPLVELSCSDVSVSV. A helical transmembrane segment spans residues 200 to 220; that stretch reads IVISFSAGSVTMITVFVIAVS. Topologically, residues 221–240 are cytoplasmic; sequence YSYILITILKMHSIEGRHKA. The helical transmembrane segment at 241 to 261 threads the bilayer; that stretch reads FSTCTSHLTAVTLYYGTITFI. Over 262 to 274 the chain is Extracellular; that stretch reads YVMPKSSFSTDQN. Residues 275–295 form a helical membrane-spanning segment; it reads KVVSVFYMVMIPMLNPLIYSL. Residues 296-314 are Cytoplasmic-facing; it reads RNNEIKGAIKRQLGKKMSC.

Belongs to the G-protein coupled receptor 1 family.

It is found in the cell membrane. Functionally, potential odorant receptor. The sequence is that of Olfactory receptor 5P72 from Mus musculus (Mouse).